Consider the following 646-residue polypeptide: Long-chain fatty acid transport protein 1 (646 aa).

The Extracellular segment spans residues methionine 1–serine 13. Residues leucine 14–valine 34 traverse the membrane as a helical segment. The Cytoplasmic portion of the chain corresponds to tyrosine 35–leucine 646. Positions glutamate 191–lysine 475 are sufficient for oligomerization. Residue tyrosine 246–lysine 257 participates in AMP binding.

It belongs to the ATP-dependent AMP-binding enzyme family. As to quaternary structure, self-associates. May function as a homodimer. Interacts with EPRS1; mediates the translocation of SLC27A1 from the cytoplasm to the plasma membrane thereby increasing the uptake of long-chain fatty acids. Interacts with DGAT2 and this interaction is enhanced in the presence of ZFYVE1. As to expression, higher expression in white adipose tissue than in heart. Highest expression in skeletal muscle, heart and fat. Lower levels in brain, kidney, lung, liver and testis. No expression in spleen or intestine.

The protein resides in the cell membrane. It is found in the mitochondrion outer membrane. Its subcellular location is the endomembrane system. It localises to the cytoplasm. It catalyses the reaction a fatty acid(in) = a fatty acid(out). It carries out the reaction (9Z)-octadecenoate(out) = (9Z)-octadecenoate(in). The catalysed reaction is hexadecanoate(out) = hexadecanoate(in). The enzyme catalyses (5Z,8Z,11Z,14Z)-eicosatetraenoate(out) = (5Z,8Z,11Z,14Z)-eicosatetraenoate(in). It catalyses the reaction (9Z,12Z)-octadecadienoate(out) = (9Z,12Z)-octadecadienoate(in). It carries out the reaction a long-chain fatty acid + ATP + CoA = a long-chain fatty acyl-CoA + AMP + diphosphate. The catalysed reaction is (5Z,8Z,11Z,14Z)-eicosatetraenoate + ATP + CoA = (5Z,8Z,11Z,14Z)-eicosatetraenoyl-CoA + AMP + diphosphate. The enzyme catalyses a very long-chain fatty acid + ATP + CoA = a very long-chain fatty acyl-CoA + AMP + diphosphate. It catalyses the reaction tetracosanoate + ATP + CoA = tetracosanoyl-CoA + AMP + diphosphate. Its activity is regulated as follows. Inhibited by Triacsin C. Both insulin and muscle contraction stimulate translocation to the plasma membrane in muscle, increasing fatty acid transport activity. In terms of biological role, mediates the import of long-chain fatty acids (LCFA) into the cell by facilitating their transport at the plasma membrane. Also functions as an acyl-CoA ligase catalyzing the ATP-dependent formation of fatty acyl-CoA using LCFA and very-long-chain fatty acids (VLCFA) as substrates, which prevents fatty acid efflux from cells and might drive more fatty acid uptake. May act directly as a bona fide transporter, or alternatively, in a cytoplasmic or membrane-associated multimeric protein complex to trap and draw fatty acids towards accumulation. Plays a pivotal role in regulating available LCFA substrates from exogenous sources in tissues undergoing high levels of beta-oxidation or triglyceride synthesis. May be involved in regulation of cholesterol metabolism. Probably involved in fatty acid transport across the blood barrier. This chain is Long-chain fatty acid transport protein 1, found in Mus musculus (Mouse).